The sequence spans 142 residues: Hemoglobin subunit alpha (142 aa).

N-acetylserine is present on Ser-1. The region spanning 1 to 142 is the Globin domain; sequence SLSDKDKAAV…VALALAERYR (142 aa). His-59 serves as a coordination point for O2. His-88 contacts heme b.

Belongs to the globin family. As to quaternary structure, hb1 is a heterotetramer of two alpha chains and two beta-1 chains, while Hb2 is a heterotetramer of two alpha chains and two beta-2 chains. Red blood cells.

Functionally, involved in oxygen transport from gills to the various peripheral tissues. The chain is Hemoglobin subunit alpha (hba) from Cygnodraco mawsoni (Antarctic dragonfish).